The chain runs to 106 residues: uncharacterized protein (106 aa).

It belongs to the HesB/IscA family.

This is an uncharacterized protein from Sinorhizobium fredii (strain NBRC 101917 / NGR234).